The chain runs to 491 residues: Inositol-pentakisphosphate 2-kinase (491 aa).

The short motif at 136 to 140 is the EXKPK motif element; that stretch reads EIKPK. At Ser282 the chain carries Phosphoserine.

The protein belongs to the IPK1 type 2 family. In terms of tissue distribution, ubiquitously expressed, with high expression in heart, brain, testis and placenta.

It localises to the cytoplasm. The protein resides in the nucleus. It catalyses the reaction 1D-myo-inositol 1,3,4,5,6-pentakisphosphate + ATP = 1D-myo-inositol hexakisphosphate + ADP + H(+). Phosphorylates Ins(1,3,4,5,6)P5 at position 2 to form Ins(1,2,3,4,5,6)P6 (InsP6 or phytate). InsP6 is involved in many processes such as mRNA export, non-homologous end-joining, endocytosis, ion channel regulation. It also protects cells from TNF-alpha-induced apoptosis. This Homo sapiens (Human) protein is Inositol-pentakisphosphate 2-kinase (IPPK).